A 605-amino-acid chain; its full sequence is Granule-bound starch synthase 1, chloroplastic/amyloplastic (605 aa).

The transit peptide at 1-72 directs the protein to the chloroplast; sequence MAALATSQLV…GGRFPSLVVC (72 aa). K91 contacts ADP-alpha-D-glucose.

This sequence belongs to the glycosyltransferase 1 family. Bacterial/plant glycogen synthase subfamily.

Its subcellular location is the plastid. The protein resides in the chloroplast. It is found in the amyloplast. The enzyme catalyses an NDP-alpha-D-glucose + [(1-&gt;4)-alpha-D-glucosyl](n) = [(1-&gt;4)-alpha-D-glucosyl](n+1) + a ribonucleoside 5'-diphosphate + H(+). The protein operates within glycan biosynthesis; starch biosynthesis. Its function is as follows. Required for the synthesis of amylose in endosperm. This chain is Granule-bound starch synthase 1, chloroplastic/amyloplastic (WAXY), found in Zea mays (Maize).